The following is a 131-amino-acid chain: Putative pre-16S rRNA nuclease (131 aa).

The protein belongs to the YqgF nuclease family.

The protein resides in the cytoplasm. Its function is as follows. Could be a nuclease involved in processing of the 5'-end of pre-16S rRNA. This Bordetella petrii (strain ATCC BAA-461 / DSM 12804 / CCUG 43448) protein is Putative pre-16S rRNA nuclease.